The following is a 367-amino-acid chain: D-alanine--D-alanine ligase (367 aa).

Positions 150-357 (KKLLASAGLP…YPTLLATMVE (208 aa)) constitute an ATP-grasp domain. Residue 178–233 (RERLGLPVFVKPSRGGSSIGVSRVTAWDELPAAIELARRHDPKVIIEAAVPGRELE) participates in ATP binding. 3 residues coordinate Mg(2+): Asp312, Glu324, and Asn326.

It belongs to the D-alanine--D-alanine ligase family. It depends on Mg(2+) as a cofactor. Mn(2+) is required as a cofactor.

It is found in the cytoplasm. The catalysed reaction is 2 D-alanine + ATP = D-alanyl-D-alanine + ADP + phosphate + H(+). It functions in the pathway cell wall biogenesis; peptidoglycan biosynthesis. Its function is as follows. Cell wall formation. This chain is D-alanine--D-alanine ligase, found in Mycolicibacterium gilvum (strain PYR-GCK) (Mycobacterium gilvum (strain PYR-GCK)).